The following is a 612-amino-acid chain: Probable translation initiation factor IF-2 (612 aa).

In terms of domain architecture, tr-type G spans 11–229 (LRQPIVVVLG…VLAGLTQRYL (219 aa)). The interval 20-27 (GHVDHGKT) is G1. GTP is bound at residue 20 to 27 (GHVDHGKT). The G2 stretch occupies residues 45 to 49 (LITQH). The segment at 84-87 (DTPG) is G3. GTP is bound by residues 84-88 (DTPGH) and 138-141 (NKID). Residues 138 to 141 (NKID) are G4. The G5 stretch occupies residues 207–209 (SAK).

Belongs to the TRAFAC class translation factor GTPase superfamily. Classic translation factor GTPase family. IF-2 subfamily.

Function in general translation initiation by promoting the binding of the formylmethionine-tRNA to ribosomes. Seems to function along with eIF-2. The polypeptide is Probable translation initiation factor IF-2 (Hyperthermus butylicus (strain DSM 5456 / JCM 9403 / PLM1-5)).